A 114-amino-acid polypeptide reads, in one-letter code: Iron-sulfur cluster insertion protein ErpA (114 aa).

3 residues coordinate iron-sulfur cluster: Cys-42, Cys-106, and Cys-108.

This sequence belongs to the HesB/IscA family. As to quaternary structure, homodimer. Iron-sulfur cluster serves as cofactor.

Its function is as follows. Required for insertion of 4Fe-4S clusters for at least IspG. The sequence is that of Iron-sulfur cluster insertion protein ErpA from Buchnera aphidicola subsp. Acyrthosiphon pisum (strain 5A).